The following is a 1162-amino-acid chain: Spike glycoprotein (1162 aa).

A signal peptide spans 1-18 (MLVTPLLLVTLLCALCSA). Over 19–1095 (ALYDSSSYVY…LKTYIKWPWY (1077 aa)) the chain is Extracellular. 22 N-linked (GlcNAc...) asparagine; by host glycosylation sites follow: N51, N77, N103, N144, N163, N178, N212, N237, N247, N264, N271, N276, N306, N425, N447, N513, N530, N579, N591, N669, N676, and N714. Positions 769-874 (IPFATQLQAR…QVDRLITGRL (106 aa)) are heptad repeat 1 (HR1). Residues 822–866 (QDVVNKQSAILTETMASLNKNFGAISSVIQEIYLQLDAIQANAQV) adopt a coiled-coil conformation. N-linked (GlcNAc...) asparagine; by host glycans are attached at residues N947, N960, N979, N1014, N1051, N1058, and N1074. Residues 1024–1105 (NDDFDFDDEL…VWLAIAFATI (82 aa)) are heptad repeat 2 (HR2). Positions 1055–1083 (PVLNITYDIDKIEEVIKGLNDSLIDLETL) form a coiled coil. Residues 1096–1116 (VWLAIAFATIIFILILGWVFF) traverse the membrane as a helical segment. Topologically, residues 1117–1162 (MTGCCGCCCGCFGIIPLMSKCGKKSSYYTTFDNDVVTEQYRPKKSV) are cytoplasmic. A Di-lysine motif motif is present at residues 1159–1162 (KKSV).

It belongs to the gammacoronaviruses spike protein family. In terms of assembly, homotrimer; each monomer consists of a S1 and a S2 subunit. The resulting peplomers protrude from the virus surface as spikes. In terms of processing, specific enzymatic cleavages in vivo yield mature proteins. The precursor is processed into S1 and S2 by host cell furin or furin-like protease to yield the mature S1 and S2 proteins. The cleavage site between S1 and S2 requires the optimal sequence [KR]-X-[KR]-R. Additionally, a second cleavage leads to the release of a fusion peptide after viral attachment to host cell receptor.

Its subcellular location is the virion membrane. It localises to the host endoplasmic reticulum-Golgi intermediate compartment membrane. In terms of biological role, attaches the virion to the host cell membrane by interacting with sialic acids, initiating the infection. Mediates fusion of the virion and cellular membranes by acting as a class I viral fusion protein. Under the current model, the protein has at least 3 conformational states: pre-fusion native state, pre-hairpin intermediate state, and post-fusion hairpin state. During viral and target cell membrane fusion, the coiled coil regions (heptad repeats) assume a trimer-of-hairpins structure, positioning the fusion peptide in close proximity to the C-terminal region of the ectodomain. The formation of this structure appears to drive apposition and subsequent fusion of viral and target cell membranes. Its function is as follows. Acts as a viral fusion peptide after S2 cleavage occurring upon virus endocytosis. The polypeptide is Spike glycoprotein (Avian infectious bronchitis virus (strain KB8523) (IBV)).